The chain runs to 297 residues: Alpha-tubulin N-acetyltransferase 1 (297 aa).

An N-acetyltransferase domain is found at 1 to 186; sequence MEFDFDVHKI…NNFVVFDGFF (186 aa). Acetyl-CoA is bound by residues 120–133 and 156–165; these read FYIH…GFGK and SEKFLSFLRK. A disordered region spans residues 269 to 297; it reads LHRTANSEQEDHSQRRRTSSLNRPQSIHH. Polar residues predominate over residues 287 to 297; sequence SSLNRPQSIHH.

The protein belongs to the acetyltransferase ATAT1 family.

The protein resides in the cytoplasm. It is found in the membrane. Its subcellular location is the clathrin-coated pit. The protein localises to the cell junction. It localises to the focal adhesion. The protein resides in the cell projection. It is found in the axon. Its subcellular location is the cytoskeleton. The protein localises to the spindle. It carries out the reaction L-lysyl-[alpha-tubulin] + acetyl-CoA = N(6)-acetyl-L-lysyl-[alpha-tubulin] + CoA + H(+). Specifically acetylates 'Lys-40' in alpha-tubulin on the lumenal side of microtubules. Promotes microtubule destabilization and accelerates microtubule dynamics; this activity may be independent of acetylation activity. Acetylates alpha-tubulin with a slow enzymatic rate, due to a catalytic site that is not optimized for acetyl transfer. Enters the microtubule through each end and diffuses quickly throughout the lumen of microtubules. Acetylates only long/old microtubules because of its slow acetylation rate since it does not have time to act on dynamically unstable microtubules before the enzyme is released. May be involved in neuron development. In Xenopus tropicalis (Western clawed frog), this protein is Alpha-tubulin N-acetyltransferase 1.